Here is a 1317-residue protein sequence, read N- to C-terminus: DNA-directed RNA polymerase subunit beta' (1317 aa).

The Zn(2+) site is built by Cys-214, Cys-286, Cys-293, and Cys-296. The interval 1279–1317 (RAYAGTQLSQDDEEFEETYDTDEDDFDMDDDDDFGDDED) is disordered. A compositionally biased stretch (acidic residues) spans 1288 to 1317 (QDDEEFEETYDTDEDDFDMDDDDDFGDDED).

It belongs to the RNA polymerase beta' chain family. RpoC2 subfamily. In cyanobacteria the RNAP catalytic core is composed of 2 alpha, 1 beta, 1 beta', 1 gamma and 1 omega subunit. When a sigma factor is associated with the core the holoenzyme is formed, which can initiate transcription. Zn(2+) serves as cofactor.

It catalyses the reaction RNA(n) + a ribonucleoside 5'-triphosphate = RNA(n+1) + diphosphate. DNA-dependent RNA polymerase catalyzes the transcription of DNA into RNA using the four ribonucleoside triphosphates as substrates. In Synechocystis sp. (strain ATCC 27184 / PCC 6803 / Kazusa), this protein is DNA-directed RNA polymerase subunit beta'.